The sequence spans 436 residues: MSHLDDLPSTPGKYKTDKVPPYGILHHHRYLRLSKLTLWASLFLALFLFYLVLSPPPSPSRRNLNDSSSISAAKYGGSHWEKQVRKSARPRSHGGLTVLVTGASGFVGTHVSIALRRRGDGVLGLDNFNRYYDPKLKRARQGLLERSGVFVVEGDINDAVLLRKLFDVVLFTHVMHLAAQAGVRYAMQNPGSYVNSNIAGFVNLLEVSKSANPQPAIVWASSSSVYGLNSKVPFSEKDRTDQPASLYAATKKAGEGIAHTYNHIYGLSLTGLRFFTVYGPWGRPDMAYFFFTKDILKGKTITVFESPDKGSVARDFTYIDDIVKGCLGALDTAEKSTGSGGKKKGPAMFRIYNLGNTSPVPVTKLVTILEKLLKMKAKKKIMPLPRNGDVEFTHANITLAQAELGYKPAVDLETGLKKFVKWYMGFYTGSKKKSSW.

Transmembrane regions (helical) follow at residues Leu-36–Pro-56 and Gly-95–Leu-115. Thr-97–Phe-128 is an NAD(+) binding site. Tyr-247 acts as the Proton acceptor in catalysis.

This sequence belongs to the NAD(P)-dependent epimerase/dehydratase family. In terms of assembly, homodimer. In terms of tissue distribution, in leaves, pollen and siliques, but not in roots or flowers.

It localises to the golgi apparatus. It is found in the golgi stack membrane. It carries out the reaction UDP-alpha-D-glucuronate = UDP-alpha-D-galacturonate. In terms of biological role, involved in the synthesis of the negatively charged monosaccharide that forms the backbone of pectic cell wall components. This chain is UDP-glucuronate 4-epimerase 5 (GAE5), found in Arabidopsis thaliana (Mouse-ear cress).